The chain runs to 20 residues: Alpha-basrubrin (20 aa).

The segment covering 1–13 (GADFQECMKEHSQ) has biased composition (basic and acidic residues). The segment at 1-20 (GADFQECMKEHSQKQHQHQG) is disordered.

Possesses antifungal activity against B.cinerea, M.arachidicola and F.oxysporum but not C.comatus and R.solani. Inhibits HIV-1 reverse transcriptase and cell-free translation. This chain is Alpha-basrubrin, found in Basella alba (Malabar spinach).